The chain runs to 262 residues: Flap endonuclease Xni (262 aa).

A Mg(2+)-binding site is contributed by Asp105. Positions Glu162–Lys257 constitute a 5'-3' exonuclease domain. Positions 172, 173, 181, 183, and 186 each coordinate K(+). Positions Gly185–Ser190 are interaction with DNA.

This sequence belongs to the Xni family. Requires Mg(2+) as cofactor. K(+) is required as a cofactor.

Has flap endonuclease activity. During DNA replication, flap endonucleases cleave the 5'-overhanging flap structure that is generated by displacement synthesis when DNA polymerase encounters the 5'-end of a downstream Okazaki fragment. This Shewanella baltica (strain OS223) protein is Flap endonuclease Xni.